The chain runs to 370 residues: tRNA-specific 2-thiouridylase MnmA (370 aa).

ATP-binding positions include 11 to 18 (GMSGGVDS) and Met37. Residues 97–99 (NPD) are interaction with target base in tRNA. Cys102 functions as the Nucleophile in the catalytic mechanism. Residues Cys102 and Cys199 are joined by a disulfide bond. Gly126 serves as a coordination point for ATP. The tract at residues 149–151 (KDQ) is interaction with tRNA. The Cysteine persulfide intermediate role is filled by Cys199. Positions 307–308 (RY) are interaction with tRNA.

This sequence belongs to the MnmA/TRMU family.

It localises to the cytoplasm. The catalysed reaction is S-sulfanyl-L-cysteinyl-[protein] + uridine(34) in tRNA + AH2 + ATP = 2-thiouridine(34) in tRNA + L-cysteinyl-[protein] + A + AMP + diphosphate + H(+). Its function is as follows. Catalyzes the 2-thiolation of uridine at the wobble position (U34) of tRNA, leading to the formation of s(2)U34. The protein is tRNA-specific 2-thiouridylase MnmA of Staphylococcus saprophyticus subsp. saprophyticus (strain ATCC 15305 / DSM 20229 / NCIMB 8711 / NCTC 7292 / S-41).